Here is a 618-residue protein sequence, read N- to C-terminus: uncharacterized protein (618 aa).

Disordered stretches follow at residues Ser-70–Arg-118, Leu-330–Cys-352, Thr-456–Thr-552, and Ile-587–Leu-618. 2 stretches are compositionally biased toward basic and acidic residues: residues Lys-74 to Glu-84 and Arg-333 to Pro-343. Low complexity predominate over residues Thr-463–Leu-481. Composition is skewed to polar residues over residues Lys-485 to Met-516 and Ser-609 to Leu-618.

This is an uncharacterized protein from Danio rerio (Zebrafish).